The following is a 492-amino-acid chain: Dipeptide permease D (492 aa).

13 consecutive transmembrane segments (helical) span residues 14 to 34, 49 to 69, 91 to 111, 138 to 158, 167 to 187, 212 to 232, 236 to 256, 269 to 289, 312 to 332, 344 to 364, 379 to 399, 413 to 433, and 458 to 478; these read VVAL…LLIL, ALFS…GYLA, LVLG…AIIV, GGFS…PIAC, WAMG…IFLC, NWGW…VLFW, SVYA…RIYL, LIVV…QGGS, MFQS…AWLV, IWGK…ILTL, LMVL…PVAM, VLTG…AGVI, and VFSQ…VIWL.

It belongs to the major facilitator superfamily. Proton-dependent oligopeptide transporter (POT/PTR) (TC 2.A.17) family. DtpD subfamily.

It is found in the cell inner membrane. In terms of biological role, probable proton-dependent permease that transports dipeptides. This is Dipeptide permease D from Klebsiella pneumoniae subsp. pneumoniae (strain ATCC 700721 / MGH 78578).